A 400-amino-acid polypeptide reads, in one-letter code: Cytohesin-2 (400 aa).

A coiled-coil region spans residues Asp10–Met67. The region spanning Phe72–Asn201 is the SEC7 domain. One can recognise a PH domain in the interval Asn259 to Ser376. A 1,2-diacyl-sn-glycero-3-phospho-(1D-myo-inositol-3,4,5-trisphosphate)-binding positions include Lys268–Thr276, Arg280, Tyr291, Arg301, Lys339, Asn350, and His351. The interval Arg387–Lys395 is C-terminal autoinhibitory region.

As to quaternary structure, heteromer. Composed of TAMALIN, CYTH2 and at least one GRM1. Interacts with ARRB1. Interacts with ARL4D; the interaction is direct. Directly interacts with CCDC120 through the coiled coil domain; this interaction stabilizes CCDC120, possibly by preventing its ubiquitination, and is required for neurite growth in a neuroblastoma cell line. Interacts with FRMD4A. Interacts (via N-terminal domain) with INAVA (via N-terminal domain). In terms of tissue distribution, present in all tissues tested, with highest protein levels in brain and adrenal.

Its subcellular location is the cell membrane. It localises to the cytoplasm. The protein localises to the cell projection. It is found in the growth cone. The protein resides in the cell junction. Its subcellular location is the tight junction. It localises to the adherens junction. Its function is as follows. Acts as a guanine-nucleotide exchange factor (GEF). Promotes guanine-nucleotide exchange on ARF1, ARF3 and ARF6. Activates ARF factors through replacement of GDP with GTP. The cell membrane form, in association with ARL4 proteins, recruits ARF6 to the plasma membrane. Involved in neurite growth. This Mus musculus (Mouse) protein is Cytohesin-2 (Cyth2).